The following is a 544-amino-acid chain: Serine/threonine-protein kinase bur1 (544 aa).

The 302-residue stretch at 25-326 (FEFLGKLGEG…AIDALKHPYF (302 aa)) folds into the Protein kinase domain. ATP contacts are provided by residues 31 to 39 (LGEGTFGEV) and Lys54. The active-site Proton acceptor is the Asp155. Positions 357–544 (AAMPPAPAGG…ERVDRGPYRR (188 aa)) are disordered. Polar residues predominate over residues 374-403 (GGWSTNSGSRTGAETRNPRISSAARSQGNQ). Composition is skewed to basic and acidic residues over residues 419–438 (RGNE…HRDG), 456–466 (HSDKTGRDRGY), 488–511 (DRNR…DKSH), and 532–544 (NYRE…PYRR).

This sequence belongs to the protein kinase superfamily. CMGC Ser/Thr protein kinase family. CDC2/CDKX subfamily.

It is found in the nucleus. The enzyme catalyses L-seryl-[protein] + ATP = O-phospho-L-seryl-[protein] + ADP + H(+). The catalysed reaction is L-threonyl-[protein] + ATP = O-phospho-L-threonyl-[protein] + ADP + H(+). It carries out the reaction [DNA-directed RNA polymerase] + ATP = phospho-[DNA-directed RNA polymerase] + ADP + H(+). In terms of biological role, serine/threonine-protein kinase involved in transcription regulation. Phosphorylates the UBC2/RAD6 ubiquitin-conjugating enzyme (E2), leading to monoubiquitination of histone H2B and the silencing of telomeric-associated genes. Also required for histone H3 methylation. Necessary for the recovery from pheromone-induced growth arrest in the cell cycle G1 phase. This chain is Serine/threonine-protein kinase bur1 (ptkA), found in Emericella nidulans (strain FGSC A4 / ATCC 38163 / CBS 112.46 / NRRL 194 / M139) (Aspergillus nidulans).